The chain runs to 602 residues: MQSERQKYIRNFSIVAHIDHGKSTLADRLIEATGTLTEREMDTQVLDNMDLEKERGITIKSQAVRLIYKRDTGEEYTLNLIDTPGHVDFNYEVSRSLAACEGAILVVDATQGIQAQTLANCYLALDNDLEIVPVINKIDLPSARPEEVKQEIEDVIGIEAEGAPLVSAKTGLNIKDALEAIVNKVPAPDGDEKAPLKALIFDSYYDSYKGVVCHIRVKEGTIKEGTEIKLMNTGKVYEVVEVGVFVPNYMPVDELKAGDVGYVTASIKNVRDARVGDTITEAKRSANEALSGYRPAVPMVFSGIYPVDGAKYEELKEALEKLQVNDAALSFEPETSIALGFGFRCGFLGLLHMDIIQERLEREFNLDIITTAPSVIYKITKTDGTLIELTNPTNMPSPSEIKLMEEPIVKSSIITPSDYVGAVMDLAQNRRGIFKDMQYLDTTRVSLNYEIPLNEIIYDFFDALKSRTRGYASFDYELIGYKDADLVKLDILLNADIVDALSMIVPRERAYAKGRNMAQKLKEIIPRQMFEIPIQAAVGAKIIARETIKAMRKDVLAKCYGGDISRKRKLLEKQKEGKKRMRQVGSVEVPQEAFMAVLKTEE.

Residues 7 to 189 form the tr-type G domain; sequence KYIRNFSIVA…AIVNKVPAPD (183 aa). GTP contacts are provided by residues 19 to 24 and 136 to 139; these read DHGKST and NKID.

This sequence belongs to the TRAFAC class translation factor GTPase superfamily. Classic translation factor GTPase family. LepA subfamily.

The protein resides in the cell membrane. The catalysed reaction is GTP + H2O = GDP + phosphate + H(+). Required for accurate and efficient protein synthesis under certain stress conditions. May act as a fidelity factor of the translation reaction, by catalyzing a one-codon backward translocation of tRNAs on improperly translocated ribosomes. Back-translocation proceeds from a post-translocation (POST) complex to a pre-translocation (PRE) complex, thus giving elongation factor G a second chance to translocate the tRNAs correctly. Binds to ribosomes in a GTP-dependent manner. The polypeptide is Elongation factor 4 (Clostridium botulinum (strain 657 / Type Ba4)).